A 200-amino-acid polypeptide reads, in one-letter code: Dephospho-CoA kinase (200 aa).

Residues 3 to 200 (IFGLTGGIGS…LNVNNKCNMD (198 aa)) enclose the DPCK domain. 11-16 (GSGKSL) is an ATP binding site.

This sequence belongs to the CoaE family.

The protein resides in the cytoplasm. It catalyses the reaction 3'-dephospho-CoA + ATP = ADP + CoA + H(+). The protein operates within cofactor biosynthesis; coenzyme A biosynthesis; CoA from (R)-pantothenate: step 5/5. Catalyzes the phosphorylation of the 3'-hydroxyl group of dephosphocoenzyme A to form coenzyme A. The chain is Dephospho-CoA kinase from Ehrlichia canis (strain Jake).